We begin with the raw amino-acid sequence, 716 residues long: Polyribonucleotide nucleotidyltransferase (716 aa).

Mg(2+)-binding residues include Asp485 and Asp491. In terms of domain architecture, KH spans 552–611 (PKITTISVPKEKIRDVIGSGGKVIREIVEYSGAKVDIGDDGTVTIAASNDEQAQKAIARI). Residues 621-689 (GRIYEGKVVK…DRGKVKLSMR (69 aa)) enclose the S1 motif domain.

Belongs to the polyribonucleotide nucleotidyltransferase family. It depends on Mg(2+) as a cofactor.

Its subcellular location is the cytoplasm. The catalysed reaction is RNA(n+1) + phosphate = RNA(n) + a ribonucleoside 5'-diphosphate. In terms of biological role, involved in mRNA degradation. Catalyzes the phosphorolysis of single-stranded polyribonucleotides processively in the 3'- to 5'-direction. The protein is Polyribonucleotide nucleotidyltransferase of Gluconobacter oxydans (strain 621H) (Gluconobacter suboxydans).